The chain runs to 536 residues: Probable monofunctional riboflavin biosynthesis protein RIBA 3, chloroplastic (536 aa).

The N-terminal 43 residues, 1–43 (MDRVLLSSQLSSQTVVNTRVQQGSGGINSIGFAVIRKGSLKLR), are a transit peptide targeting the chloroplast. The segment at 44 to 310 (CYAIGGLGGG…IADLIRYRRK (267 aa)) is inactive DHBP synthase. D-ribulose 5-phosphate-binding positions include 133-134 (GD), Asp-138, and 248-252 (RAGHT). The tract at residues 311–536 (REKLVELIAV…GDQDEDDTHN (226 aa)) is GTP cyclohydrolase II. 361 to 365 (RVHSE) serves as a coordination point for GTP. The Zn(2+) site is built by Cys-366, Cys-377, and Cys-379. GTP-binding positions include Gln-382, 405–407 (EGR), and Thr-427. Catalysis depends on Asp-439, which acts as the Proton acceptor; for GTP cyclohydrolase activity. The active-site Nucleophile; for GTP cyclohydrolase activity is the Arg-441. The GTP site is built by Thr-462 and Lys-467. A disordered region spans residues 507–536 (YGSDLPGNVPEEFLNPDDIAGDQDEDDTHN). Over residues 525–536 (IAGDQDEDDTHN) the composition is skewed to acidic residues.

It in the N-terminal section; belongs to the DHBP synthase family. In the C-terminal section; belongs to the GTP cyclohydrolase II family. Zn(2+) serves as cofactor.

The protein localises to the plastid. It is found in the chloroplast. The catalysed reaction is GTP + 4 H2O = 2,5-diamino-6-hydroxy-4-(5-phosphoribosylamino)-pyrimidine + formate + 2 phosphate + 3 H(+). Its pathway is cofactor biosynthesis; riboflavin biosynthesis; 5-amino-6-(D-ribitylamino)uracil from GTP: step 1/4. Involved in riboflavin biosynthesis. Catalyzes the conversion of GTP to 2,5-diamino-6-ribosylamino-4(3H)-pyrimidinone 5'-phosphate (DARP), formate and pyrophosphate. The sequence is that of Probable monofunctional riboflavin biosynthesis protein RIBA 3, chloroplastic (RIBA3) from Oryza sativa subsp. japonica (Rice).